The chain runs to 155 residues: S-ribosylhomocysteine lyase (155 aa).

Residues His57, His61, and Cys124 each contribute to the Fe cation site.

It belongs to the LuxS family. Homodimer. Fe cation is required as a cofactor.

It carries out the reaction S-(5-deoxy-D-ribos-5-yl)-L-homocysteine = (S)-4,5-dihydroxypentane-2,3-dione + L-homocysteine. Involved in the synthesis of autoinducer 2 (AI-2) which is secreted by bacteria and is used to communicate both the cell density and the metabolic potential of the environment. The regulation of gene expression in response to changes in cell density is called quorum sensing. Catalyzes the transformation of S-ribosylhomocysteine (RHC) to homocysteine (HC) and 4,5-dihydroxy-2,3-pentadione (DPD). This chain is S-ribosylhomocysteine lyase, found in Listeria monocytogenes serotype 4b (strain CLIP80459).